The chain runs to 1202 residues: Nucleolar protein 6 (1202 aa).

Residues 1-64 (MNKTKRKQQS…KKYKDNETNK (64 aa)) are disordered.

The protein belongs to the NRAP family. As to quaternary structure, part of the small subunit (SSU) processome, composed of more than 70 proteins and the RNA chaperone small nucleolar RNA (snoRNA) U3.

The protein resides in the nucleus. It localises to the nucleolus. It is found in the chromosome. In terms of biological role, part of the small subunit (SSU) processome, first precursor of the small eukaryotic ribosomal subunit. During the assembly of the SSU processome in the nucleolus, many ribosome biogenesis factors, an RNA chaperone and ribosomal proteins associate with the nascent pre-rRNA and work in concert to generate RNA folding, modifications, rearrangements and cleavage as well as targeted degradation of pre-ribosomal RNA by the RNA exosome. In Drosophila willistoni (Fruit fly), this protein is Nucleolar protein 6.